The sequence spans 293 residues: Putative F-box/kelch-repeat protein At4g34170 (293 aa).

In terms of domain architecture, F-box spans 9–55 (VKTMLMLHDDLILNCLARVSRSNHPTLSLVCKRFHSLLASVELYQTR). Kelch repeat units follow at residues 94-140 (NIDA…TLDG), 141-187 (KIYV…ESVR), and 226-272 (SYCV…LADY).

This is Putative F-box/kelch-repeat protein At4g34170 from Arabidopsis thaliana (Mouse-ear cress).